We begin with the raw amino-acid sequence, 391 residues long: Superoxide dismutase [Fe] 1, chloroplastic (391 aa).

The transit peptide at 1–73 (MAFATLVGVG…GESTNSRVLQ (73 aa)) directs the protein to the chloroplast. The span at 87–119 (VNDGIDDETASDAEMDEDAEANGDESSGTDEDA) shows a compositional bias: acidic residues. The interval 87–120 (VNDGIDDETASDAEMDEDAEANGDESSGTDEDAS) is disordered. Fe cation is bound by residues histidine 148, histidine 202, aspartate 301, and histidine 305. The segment at 370–391 (MPQQVNGDAREQTSGQEKSLGV) is disordered. Positions 381-391 (QTSGQEKSLGV) are enriched in polar residues.

It belongs to the iron/manganese superoxide dismutase family. Homodimer. Requires Fe cation as cofactor.

The protein resides in the plastid. It is found in the chloroplast. It catalyses the reaction 2 superoxide + 2 H(+) = H2O2 + O2. Destroys superoxide anion radicals which are normally produced within the cells and which are toxic to biological systems. This Oryza sativa subsp. japonica (Rice) protein is Superoxide dismutase [Fe] 1, chloroplastic.